The sequence spans 655 residues: Broad substrate specificity ATP-binding cassette transporter ABCG2 (655 aa).

The Cytoplasmic portion of the chain corresponds to Met1–Ser395. Positions Leu36–Pro285 constitute an ABC transporter domain. ATP-binding positions include Gly79 to Ser86, Arg183 to Glu189, Glu210, and His242. The ABC transmembrane type-2 domain occupies Leu389–Leu651. The chain crosses the membrane as a helical span at residues Ile396–Leu416. The Extracellular portion of the chain corresponds to Lys417–Gly428. Residues Val429–Val449 traverse the membrane as a helical segment. The Cytoplasmic segment spans residues Val450 to Asp477. The helical transmembrane segment at Leu478–Gly498 threads the bilayer. At Leu499–Phe506 the chain is on the extracellular side. A helical transmembrane segment spans residues Phe507–Ile527. Residues Ala528 to Ser535 lie on the Cytoplasmic side of the membrane. A helical transmembrane segment spans residues Ile536–Val556. At Asn557–His630 the chain is on the extracellular side. The cysteines at positions 592 and 608 are disulfide-linked. Residues Asn596 and Asn600 are each glycosylated (N-linked (GlcNAc...) asparagine). The helical transmembrane segment at Val631 to Leu651 threads the bilayer. Residues Lys652 to Ser655 lie on the Cytoplasmic side of the membrane.

It belongs to the ABC transporter superfamily. ABCG family. Eye pigment precursor importer (TC 3.A.1.204) subfamily. In terms of assembly, homodimer; disulfide-linked. The minimal functional unit is a homodimer, but the major oligomeric form in plasma membrane is a homotetramer with possibility of higher order oligomerization up to homododecamers. In terms of processing, N-glycosylated. Glycosylation-deficient ABCG2 is normally expressed and functional. Phosphorylated. Phosphorylation may regulate the localization to the plasma membrane, the homooligomerization and therefore, the activity of the transporter.

It is found in the cell membrane. It localises to the apical cell membrane. The protein resides in the mitochondrion membrane. The enzyme catalyses ATP + H2O + xenobioticSide 1 = ADP + phosphate + xenobioticSide 2.. It carries out the reaction urate(in) + ATP + H2O = urate(out) + ADP + phosphate + H(+). It catalyses the reaction indoxyl sulfate(in) + ATP + H2O = indoxyl sulfate(out) + ADP + phosphate + H(+). The catalysed reaction is sphing-4-enine 1-phosphate(in) + ATP + H2O = sphing-4-enine 1-phosphate(out) + ADP + phosphate + H(+). The enzyme catalyses estrone 3-sulfate(in) + ATP + H2O = estrone 3-sulfate(out) + ADP + phosphate + H(+). It carries out the reaction dehydroepiandrosterone 3-sulfate(in) + ATP + H2O = dehydroepiandrosterone 3-sulfate(out) + ADP + phosphate + H(+). It catalyses the reaction 4-methylumbelliferone sulfate(in) + ATP + H2O = 4-methylumbelliferone sulfate(out) + ADP + phosphate + H(+). The catalysed reaction is 5,7-dimethyl-2-methylamino-4-(3-pyridylmethyl)-1,3-benzothiazol-6-yl beta-D-glucuronate(in) + ATP + H2O = 5,7-dimethyl-2-methylamino-4-(3-pyridylmethyl)-1,3-benzothiazol-6-yl beta-D-glucuronate(out) + ADP + phosphate + H(+). The enzyme catalyses 4-methylumbelliferone beta-D-glucuronate(in) + ATP + H2O = 4-methylumbelliferone beta-D-glucuronate(out) + ADP + phosphate + H(+). It carries out the reaction 5,7-dimethyl-2-methylamino-4-(3-pyridylmethyl)-1,3-benzothiazol-6-yl sulfate(in) + ATP + H2O = 5,7-dimethyl-2-methylamino-4-(3-pyridylmethyl)-1,3-benzothiazol-6-yl sulfate(out) + ADP + phosphate + H(+). It catalyses the reaction 17beta-estradiol 17-O-(beta-D-glucuronate)(in) + ATP + H2O = 17beta-estradiol 17-O-(beta-D-glucuronate)(out) + ADP + phosphate + H(+). The catalysed reaction is methotrexate(in) + ATP + H2O = methotrexate(out) + ADP + phosphate + H(+). The enzyme catalyses riboflavin(in) + ATP + H2O = riboflavin(out) + ADP + phosphate + H(+). It carries out the reaction pheophorbide a(in) + ATP + H2O = pheophorbide a(out) + ADP + phosphate + H(+). It catalyses the reaction itaconate(in) + ATP + H2O = itaconate(out) + ADP + phosphate + H(+). In terms of biological role, broad substrate specificity ATP-dependent transporter of the ATP-binding cassette (ABC) family that actively extrudes a wide variety of physiological compounds, dietary toxins and xenobiotics from cells. Involved in porphyrin homeostasis, mediating the export of protoporphyrin IX (PPIX) from both mitochondria to cytosol and cytosol to extracellular space, it also functions in the cellular export of heme. Also mediates the efflux of sphingosine-1-P from cells. Acts as a urate exporter functioning in both renal and extrarenal urate excretion. In kidney, it also functions as a physiological exporter of the uremic toxin indoxyl sulfate. Also involved in the excretion of steroids like estrone 3-sulfate/E1S, 3beta-sulfooxy-androst-5-en-17-one/DHEAS, and other sulfate conjugates. Mediates the secretion of the riboflavin and biotin vitamins into milk. Extrudes pheophorbide a, a phototoxic porphyrin catabolite of chlorophyll, reducing its bioavailability. Plays an important role in the exclusion of xenobiotics from the brain. It confers to cells a resistance to multiple drugs and other xenobiotics including mitoxantrone, pheophorbide, camptothecin, methotrexate, azidothymidine, and the anthracyclines daunorubicin and doxorubicin, through the control of their efflux. In placenta, it limits the penetration of drugs from the maternal plasma into the fetus. May play a role in early stem cell self-renewal by blocking differentiation. In inflammatory macrophages, exports itaconate from the cytosol to the extracellular compartment and limits the activation of TFEB-dependent lysosome biogenesis involved in antibacterial innate immune response. The chain is Broad substrate specificity ATP-binding cassette transporter ABCG2 (ABCG2) from Bos taurus (Bovine).